Here is a 278-residue protein sequence, read N- to C-terminus: Methyltransferase adrK (278 aa).

S-adenosyl-L-methionine-binding positions include 124–125, 151–152, and 152–153; these read DL, DV, and VL.

Belongs to the class I-like SAM-binding methyltransferase superfamily. In terms of assembly, homodimer.

It functions in the pathway secondary metabolite biosynthesis; terpenoid biosynthesis. Methyltransferase; part of the gene cluster that mediates the biosynthesis of andrastins, meroterpenoid compounds that exhibit inhibitory activity against ras farnesyltransferase, suggesting that they could be promising leads for antitumor agents. The first step of the pathway is the synthesis of 3,5-dimethylorsellinic acid (DMOA) by the polyketide synthase adrD via condensation of one acetyl-CoA starter unit with 3 malonyl-CoA units and 2 methylations. DMAO is then converted to farnesyl-DMAO by the prenyltransferase adrG. The methyltransferase adrK catalyzes the methylation of the carboxyl group of farnesyl-DMAO to farnesyl-DMAO methyl ester which is further converted to epoxyfarnesyl-DMAO methyl ester by the FAD-dependent monooxygenase adrH. The terpene cyclase adrI then catalyzes the carbon skeletal rearrangement to generate the andrastin E, the first compound in the pathway having the andrastin scaffold, with the tetracyclic ring system. The post-cyclization tailoring enzymes adrF, adrE, adrJ, and adrA, are involved in the conversion of andrastin E into andrastin A. The short chain dehydrogenase adrF is responsible for the oxidation of the C-3 a hydroxyl group of andrastin E to yield the corresponding ketone, andrastin D. The ketoreductase adrE stereoselectively reduces the carbonyl moiety to reverse the stereochemistry of the C-3 position to yield andrastin F. The acetyltransferase adrJ is the acetyltransferase that attaches the acetyl group to the C-3 hydroxyl group of andrastin F to yield andrastin C. Finally, the cytochrome P450 monooxygenase adrA catalyzes two sequential oxidation reactions of the C-23 methyl group, to generate the corresponding alcohol andrastin B, and aldehyde andrastin A. The sequence is that of Methyltransferase adrK from Penicillium roqueforti.